The following is a 296-amino-acid chain: Probable endonuclease 4 (296 aa).

Zn(2+) contacts are provided by His-69, His-109, Glu-160, Asp-194, His-197, His-231, Asp-244, His-246, and Glu-276.

The protein belongs to the AP endonuclease 2 family. It depends on Zn(2+) as a cofactor.

It catalyses the reaction Endonucleolytic cleavage to 5'-phosphooligonucleotide end-products.. Functionally, endonuclease IV plays a role in DNA repair. It cleaves phosphodiester bonds at apurinic or apyrimidinic (AP) sites, generating a 3'-hydroxyl group and a 5'-terminal sugar phosphate. This chain is Probable endonuclease 4, found in Sulfurovum sp. (strain NBC37-1).